A 411-amino-acid polypeptide reads, in one-letter code: Alpha-galactosidase (411 aa).

Positions 1–24 (MATHYSIIGGMIIVVLLMIIGSEG) are cleaved as a signal peptide. A propeptide spanning residues 25 to 47 (GRLLEKKNRTSAEAEHYNVRRYL) is cleaved from the precursor. Asn-32 carries N-linked (GlcNAc...) asparagine glycosylation. An intrachain disulfide couples Cys-68 to Cys-100. N-linked (GlcNAc...) asparagine glycosylation is present at Asn-145. Cys-148 and Cys-179 form a disulfide bridge. Asp-177 functions as the Nucleophile in the catalytic mechanism. Residue 210 to 214 (EWGWE) coordinates substrate. The Proton donor role is filled by Asp-232. An N-linked (GlcNAc...) asparagine glycan is attached at Asn-352.

The protein belongs to the glycosyl hydrolase 27 family.

The enzyme catalyses Hydrolysis of terminal, non-reducing alpha-D-galactose residues in alpha-D-galactosides, including galactose oligosaccharides, galactomannans and galactolipids.. Its function is as follows. Involved in the hydrolysis of the galactomannan, it splits alpha-linked galactose moieties. It is particularly suitable for the hydrolysis of guar gum to a gum with improved gelling properties. Preferentially cleaves alpha-1,6 glycoside linkages. This chain is Alpha-galactosidase, found in Cyamopsis tetragonoloba (Guar).